A 756-amino-acid chain; its full sequence is Serine/threonine-protein kinase DCLK2 (756 aa).

Residues 1–44 are disordered; that stretch reads MASTRSIELEHFEERDKRPRPGSRRGAPSSSGGSSISGPKGNGL. Positions 7–19 are enriched in basic and acidic residues; it reads IELEHFEERDKRP. Residues 24–43 show a composition bias toward low complexity; the sequence is RRGAPSSSGGSSISGPKGNG. The residue at position 61 (T61) is a Phosphothreonine. 2 Doublecortin domains span residues 72–158 and 196–279; these read KKAR…VDYT and KLVT…AQDD. Low complexity-rich tracts occupy residues 301-311 and 323-346; these read KYSGSRSPGFS and TPSS…SPGS. The tract at residues 301–375 is disordered; it reads KYSGSRSPGF…GPELDRCLSP (75 aa). Over residues 353–364 the composition is skewed to polar residues; the sequence is ISAQGRSSSNVN. S361 is subject to Phosphoserine. The region spanning 393 to 650 is the Protein kinase domain; the sequence is YRIGKVIGDG…AGEILSHPWV (258 aa). ATP is bound by residues 399–407 and K422; that span reads IGDGNFAVV. The active-site Proton acceptor is the D514. The residue at position 646 (S646) is a Phosphoserine. Phosphothreonine is present on T665. The segment at 707 to 756 is disordered; the sequence is QDSSRPSREQTSPVPPSAQEAPPPLESPRPPGPPATSGCDLAGTWRRHRD. Pro residues predominate over residues 719–740; the sequence is PVPPSAQEAPPPLESPRPPGPP.

It belongs to the protein kinase superfamily. CAMK Ser/Thr protein kinase family. CaMK subfamily. In terms of assembly, binds to and stabilizes microtubules. Interacts with MAPK8IP1/JIP-1, MAPK8IP2/JIP-2, MAPK9/JNK2, PPP1R9B/NEURABIN-2 and actin. Autophosphorylated. As to expression, expressed in the central and peripheral nervous system including the brain, spinal cord, cranial and dorsal root ganglia and in the parasympathetic ganglia. Present in neurons, but not in glial cells, in most forebrain areas. Strong expression in the hippocampal CA1 pyramidal cell layer. Expressed in the photoreceptor sensory cilium complex and in eyes. Also detected in individual cells of the olfactory epithelium.

It localises to the cytoplasm. It is found in the cytoskeleton. It catalyses the reaction L-seryl-[protein] + ATP = O-phospho-L-seryl-[protein] + ADP + H(+). The enzyme catalyses L-threonyl-[protein] + ATP = O-phospho-L-threonyl-[protein] + ADP + H(+). Functionally, protein kinase with a significantly reduced Ca(2+)+/CAM affinity and dependence compared to other members of the CaMK family. May play a role in the down-regulation of CRE-dependent gene activation probably by phosphorylation of the CREB coactivator CRTC2/TORC2 and the resulting retention of TORC2 in the cytoplasm. This Mus musculus (Mouse) protein is Serine/threonine-protein kinase DCLK2 (Dclk2).